Here is an 84-residue protein sequence, read N- to C-terminus: ATP synthase subunit c (84 aa).

The next 2 helical transmembrane spans lie at 9-29 and 54-74; these read IIGA…GFAI and IVAG…LLFI.

Belongs to the ATPase C chain family. In terms of assembly, F-type ATPases have 2 components, F(1) - the catalytic core - and F(0) - the membrane proton channel. F(1) has five subunits: alpha(3), beta(3), gamma(1), delta(1), epsilon(1). F(0) has three main subunits: a(1), b(2) and c(10-14). The alpha and beta chains form an alternating ring which encloses part of the gamma chain. F(1) is attached to F(0) by a central stalk formed by the gamma and epsilon chains, while a peripheral stalk is formed by the delta and b chains.

It is found in the cell inner membrane. Functionally, f(1)F(0) ATP synthase produces ATP from ADP in the presence of a proton or sodium gradient. F-type ATPases consist of two structural domains, F(1) containing the extramembraneous catalytic core and F(0) containing the membrane proton channel, linked together by a central stalk and a peripheral stalk. During catalysis, ATP synthesis in the catalytic domain of F(1) is coupled via a rotary mechanism of the central stalk subunits to proton translocation. Key component of the F(0) channel; it plays a direct role in translocation across the membrane. A homomeric c-ring of between 10-14 subunits forms the central stalk rotor element with the F(1) delta and epsilon subunits. The sequence is that of ATP synthase subunit c from Haemophilus influenzae (strain PittEE).